A 360-amino-acid chain; its full sequence is Peptide chain release factor 1 (360 aa).

Q237 carries the post-translational modification N5-methylglutamine.

This sequence belongs to the prokaryotic/mitochondrial release factor family. Post-translationally, methylated by PrmC. Methylation increases the termination efficiency of RF1.

It localises to the cytoplasm. In terms of biological role, peptide chain release factor 1 directs the termination of translation in response to the peptide chain termination codons UAG and UAA. In Stutzerimonas stutzeri (strain A1501) (Pseudomonas stutzeri), this protein is Peptide chain release factor 1.